Reading from the N-terminus, the 464-residue chain is Protein FAM90A24 (464 aa).

3 disordered regions span residues 1-42 (MMAR…DPRL), 69-389 (VPAT…HDGA), and 415-437 (HSPE…SEAP). Basic and acidic residues-rich tracts occupy residues 74-89 (GKKE…KPRG) and 97-114 (NKDK…DPQR). Over residues 180-197 (LASLSPLRKASLSSSSSL) the composition is skewed to low complexity.

Belongs to the FAM90 family.

The protein is Protein FAM90A24 of Homo sapiens (Human).